We begin with the raw amino-acid sequence, 671 residues long: E3 ubiquitin-protein ligase pub2 (671 aa).

The C2 domain maps to Met1–Leu112. Residues Gly242–Asp275 form the WW domain. One can recognise an HECT domain in the interval Ser338–Glu671. Cys639 functions as the Glycyl thioester intermediate in the catalytic mechanism.

Interacts with the E2 ubiquitin-conjugating enzyme ubc4.

It is found in the membrane. Its subcellular location is the cytoplasm. The catalysed reaction is S-ubiquitinyl-[E2 ubiquitin-conjugating enzyme]-L-cysteine + [acceptor protein]-L-lysine = [E2 ubiquitin-conjugating enzyme]-L-cysteine + N(6)-ubiquitinyl-[acceptor protein]-L-lysine.. The protein operates within protein modification; protein ubiquitination. Its function is as follows. E3 ubiquitin-protein ligase which accepts ubiquitin from an E2 ubiquitin-conjugating enzyme in the form of a thioester and then directly transfers the ubiquitin to targeted substrates. The polypeptide is E3 ubiquitin-protein ligase pub2 (pub2) (Schizosaccharomyces pombe (strain 972 / ATCC 24843) (Fission yeast)).